A 338-amino-acid chain; its full sequence is Fructose-1,6-bisphosphatase 1 (338 aa).

Residue Ala2 is modified to N-acetylalanine. AMP-binding positions include 18–22 (VMEQG) and 28–32 (TGELT). Mg(2+)-binding residues include Asp69 and Glu98. Residue 113–114 (KY) coordinates AMP. 3 residues coordinate Mg(2+): Asp119, Leu121, and Asp122. Residue 122 to 125 (DGSS) participates in substrate binding. AMP is bound at residue Arg141. Residue Lys151 is modified to N6-succinyllysine. Substrate-binding positions include 213–216 (NEGY), 244–249 (RYVGSM), Tyr265, and 275–277 (KLR). A phosphotyrosine mark is found at Tyr216, Tyr245, and Tyr265. Glu281 lines the Mg(2+) pocket.

It belongs to the FBPase class 1 family. In terms of assembly, homotetramer. Mg(2+) serves as cofactor. As to expression, detected in pancreatic beta-cell lines MIN6 and beta-TC and in liver (at protein level). Preferentially expressed in liver, with lower levels detected in pancreatic islets and intestine, and very low levels in blood, muscle, brain and spleen.

It carries out the reaction beta-D-fructose 1,6-bisphosphate + H2O = beta-D-fructose 6-phosphate + phosphate. It participates in carbohydrate biosynthesis; gluconeogenesis. Subject to complex allosteric regulation. The enzyme can assume an active R-state, or an inactive T-state. Intermediate conformations may exist. AMP acts as an allosteric inhibitor. AMP binding affects the turnover of bound substrate and not the affinity for substrate. Fructose 2,6-bisphosphate acts as a competitive inhibitor. Fructose 2,6-bisphosphate and AMP have synergistic effects. Catalyzes the hydrolysis of fructose 1,6-bisphosphate to fructose 6-phosphate in the presence of divalent cations, acting as a rate-limiting enzyme in gluconeogenesis. Plays a role in regulating glucose sensing and insulin secretion of pancreatic beta-cells. Appears to modulate glycerol gluconeogenesis in liver. Important regulator of appetite and adiposity; increased expression of the protein in liver after nutrient excess increases circulating satiety hormones and reduces appetite-stimulating neuropeptides and thus seems to provide a feedback mechanism to limit weight gain. In Mus musculus (Mouse), this protein is Fructose-1,6-bisphosphatase 1 (Fbp1).